A 710-amino-acid chain; its full sequence is multidrug resistance regulator 2 (710 aa).

The segment at residues 11–37 (CDACRSRKIKCNRQTPCASCHKSKRDC) is a DNA-binding region (zn(2)-C6 fungal-type). 2 helical membrane-spanning segments follow: residues 475–495 (DLVI…LYLF) and 525–545 (LFLA…TNFL).

It localises to the nucleus. The protein localises to the membrane. Its function is as follows. Transcription factor that controls the expression of CDR1, the major multidrug efflux pump. Required for yeast cell adherence to silicone substrate and plays a role in virulence. In Candida albicans (strain SC5314 / ATCC MYA-2876) (Yeast), this protein is multidrug resistance regulator 2.